Reading from the N-terminus, the 242-residue chain is Ribosomal RNA small subunit methyltransferase G (242 aa).

Residues glycine 82, phenylalanine 87, 133–134 (AE), and arginine 152 contribute to the S-adenosyl-L-methionine site.

Belongs to the methyltransferase superfamily. RNA methyltransferase RsmG family.

The protein resides in the cytoplasm. Its function is as follows. Specifically methylates the N7 position of a guanine in 16S rRNA. The polypeptide is Ribosomal RNA small subunit methyltransferase G (Acetivibrio thermocellus (strain ATCC 27405 / DSM 1237 / JCM 9322 / NBRC 103400 / NCIMB 10682 / NRRL B-4536 / VPI 7372) (Clostridium thermocellum)).